The following is a 1071-amino-acid chain: Carbamoyl phosphate synthase large chain (1071 aa).

The tract at residues 1–403 is carboxyphosphate synthetic domain; it reads MPKRTDLKSI…SFQKALRGLE (403 aa). Residues R129, R169, G175, G176, Q208, V210, E215, G241, V242, H243, Q285, and E299 each coordinate ATP. The 196-residue stretch at 133-328 folds into the ATP-grasp 1 domain; it reads KEAMEKIGLS…IAKVAAKLAV (196 aa). The Mg(2+) site is built by Q285, E299, and N301. 3 residues coordinate Mn(2+): Q285, E299, and N301. Residues 404-548 form an oligomerization domain region; it reads TGLCGFNPRS…YSTYEEECES (145 aa). The segment at 549-930 is carbamoyl phosphate synthetic domain; sequence RPSDRKKVMI…AYYKAQLGAG (382 aa). Positions 673-864 constitute an ATP-grasp 2 domain; the sequence is QKVLNDLGLR…LAKVGARCMA (192 aa). Residues R709, F748, L750, E755, G780, I781, H782, S783, Q823, and E835 each coordinate ATP. Mg(2+) contacts are provided by Q823, E835, and N837. Residues Q823, E835, and N837 each coordinate Mn(2+). The 141-residue stretch at 931-1071 folds into the MGS-like domain; the sequence is ERLNPTGKIF…ELHGRLKNRN (141 aa). Residues 931–1071 are allosteric domain; that stretch reads ERLNPTGKIF…ELHGRLKNRN (141 aa).

This sequence belongs to the CarB family. Composed of two chains; the small (or glutamine) chain promotes the hydrolysis of glutamine to ammonia, which is used by the large (or ammonia) chain to synthesize carbamoyl phosphate. Tetramer of heterodimers (alpha,beta)4. The cofactor is Mg(2+). Mn(2+) serves as cofactor.

The enzyme catalyses hydrogencarbonate + L-glutamine + 2 ATP + H2O = carbamoyl phosphate + L-glutamate + 2 ADP + phosphate + 2 H(+). It carries out the reaction hydrogencarbonate + NH4(+) + 2 ATP = carbamoyl phosphate + 2 ADP + phosphate + 2 H(+). Its pathway is amino-acid biosynthesis; L-arginine biosynthesis; carbamoyl phosphate from bicarbonate: step 1/1. It functions in the pathway pyrimidine metabolism; UMP biosynthesis via de novo pathway; (S)-dihydroorotate from bicarbonate: step 1/3. Large subunit of the glutamine-dependent carbamoyl phosphate synthetase (CPSase). CPSase catalyzes the formation of carbamoyl phosphate from the ammonia moiety of glutamine, carbonate, and phosphate donated by ATP, constituting the first step of 2 biosynthetic pathways, one leading to arginine and/or urea and the other to pyrimidine nucleotides. The large subunit (synthetase) binds the substrates ammonia (free or transferred from glutamine from the small subunit), hydrogencarbonate and ATP and carries out an ATP-coupled ligase reaction, activating hydrogencarbonate by forming carboxy phosphate which reacts with ammonia to form carbamoyl phosphate. The sequence is that of Carbamoyl phosphate synthase large chain from Neisseria meningitidis serogroup B (strain ATCC BAA-335 / MC58).